Reading from the N-terminus, the 323-residue chain is Peridinin-chlorophyll a-binding protein 3 (323 aa).

2 tandem repeats follow at residues 1 to 173 (DGIA…RYVP) and 174 to 323 (DGPV…SAVV).

As to quaternary structure, homotrimer.

Its subcellular location is the plastid. The protein resides in the chloroplast. In terms of biological role, water-soluble antenna for capture of solar energy in the blue-green range. Peridinin is an asymmetric carotenoid. This chain is Peridinin-chlorophyll a-binding protein 3, found in Amphidinium carterae (Dinoflagellate).